The chain runs to 187 residues: UPF0200 protein APE_1753.1 (187 aa).

13 to 20 (GLPGSGKS) lines the ATP pocket.

The protein belongs to the UPF0200 family.

The protein is UPF0200 protein APE_1753.1 of Aeropyrum pernix (strain ATCC 700893 / DSM 11879 / JCM 9820 / NBRC 100138 / K1).